The chain runs to 459 residues: Protein phosphatase 1M (459 aa).

The segment covering M1–F10 has biased composition (basic residues). The tract at residues M1 to G64 is disordered. Residues E14–S27 are compositionally biased toward pro residues. Residues R38–D48 show a composition bias toward low complexity. Mn(2+) contacts are provided by D125 and G126. Residues M162–H459 form the PPM-type phosphatase domain.

The protein belongs to the PP2C family. The cofactor is Mg(2+). Mn(2+) is required as a cofactor.

Its subcellular location is the nucleus. It catalyses the reaction O-phospho-L-seryl-[protein] + H2O = L-seryl-[protein] + phosphate. The enzyme catalyses O-phospho-L-threonyl-[protein] + H2O = L-threonyl-[protein] + phosphate. The chain is Protein phosphatase 1M (PPM1M) from Homo sapiens (Human).